The primary structure comprises 477 residues: Transposase for insertion sequence element IS231F (477 aa).

It belongs to the transposase 11 family.

In terms of biological role, involved in the transposition of the insertion sequence. The protein is Transposase for insertion sequence element IS231F of Bacillus thuringiensis subsp. israelensis.